The chain runs to 589 residues: Aspartate--tRNA ligase (589 aa).

Residue glutamate 172 coordinates L-aspartate. The segment at 196 to 199 (QLFK) is aspartate. Arginine 218 contacts L-aspartate. ATP-binding positions include 218–220 (RDE) and glutamine 227. Histidine 449 provides a ligand contact to L-aspartate. An ATP-binding site is contributed by glutamate 483. Position 490 (arginine 490) interacts with L-aspartate. Residue 535-538 (GLDR) coordinates ATP.

Belongs to the class-II aminoacyl-tRNA synthetase family. Type 1 subfamily. In terms of assembly, homodimer.

It is found in the cytoplasm. It carries out the reaction tRNA(Asp) + L-aspartate + ATP = L-aspartyl-tRNA(Asp) + AMP + diphosphate. In terms of biological role, catalyzes the attachment of L-aspartate to tRNA(Asp) in a two-step reaction: L-aspartate is first activated by ATP to form Asp-AMP and then transferred to the acceptor end of tRNA(Asp). The chain is Aspartate--tRNA ligase from Haemophilus ducreyi (strain 35000HP / ATCC 700724).